The chain runs to 313 residues: Ribosomal RNA small subunit methyltransferase H (313 aa).

Residues 34–36 (GGH), Asp-53, Phe-80, Asp-101, and Gln-108 contribute to the S-adenosyl-L-methionine site.

The protein belongs to the methyltransferase superfamily. RsmH family.

It is found in the cytoplasm. It carries out the reaction cytidine(1402) in 16S rRNA + S-adenosyl-L-methionine = N(4)-methylcytidine(1402) in 16S rRNA + S-adenosyl-L-homocysteine + H(+). Functionally, specifically methylates the N4 position of cytidine in position 1402 (C1402) of 16S rRNA. The protein is Ribosomal RNA small subunit methyltransferase H of Lacticaseibacillus paracasei (strain ATCC 334 / BCRC 17002 / CCUG 31169 / CIP 107868 / KCTC 3260 / NRRL B-441) (Lactobacillus paracasei).